The chain runs to 181 residues: Protein Syd (181 aa).

Belongs to the Syd family.

The protein localises to the cell inner membrane. Its function is as follows. Interacts with the SecY protein in vivo. May bind preferentially to an uncomplexed state of SecY, thus functioning either as a chelating agent for excess SecY in the cell or as a regulatory factor that negatively controls the translocase function. The chain is Protein Syd from Salmonella arizonae (strain ATCC BAA-731 / CDC346-86 / RSK2980).